The sequence spans 445 residues: tRNA modification GTPase MnmE (445 aa).

Arginine 20, glutamate 79, and lysine 119 together coordinate (6S)-5-formyl-5,6,7,8-tetrahydrofolate. The 157-residue stretch at 215–371 (GLKLAIIGPP…ILKNIENIAE (157 aa)) folds into the TrmE-type G domain. Asparagine 225 lines the K(+) pocket. Residues 225-230 (NTGKSS), 244-250 (SNIAGTT), and 269-272 (DTAG) each bind GTP. Serine 229 is a Mg(2+) binding site. 3 residues coordinate K(+): serine 244, isoleucine 246, and threonine 249. Threonine 250 is a binding site for Mg(2+). (6S)-5-formyl-5,6,7,8-tetrahydrofolate is bound at residue lysine 445.

Belongs to the TRAFAC class TrmE-Era-EngA-EngB-Septin-like GTPase superfamily. TrmE GTPase family. In terms of assembly, homodimer. Heterotetramer of two MnmE and two MnmG subunits. It depends on K(+) as a cofactor.

It localises to the cytoplasm. Functionally, exhibits a very high intrinsic GTPase hydrolysis rate. Involved in the addition of a carboxymethylaminomethyl (cmnm) group at the wobble position (U34) of certain tRNAs, forming tRNA-cmnm(5)s(2)U34. The polypeptide is tRNA modification GTPase MnmE (Rickettsia prowazekii (strain Madrid E)).